The chain runs to 94 residues: Co-chaperonin GroES (94 aa).

The protein belongs to the GroES chaperonin family. Heptamer of 7 subunits arranged in a ring. Interacts with the chaperonin GroEL.

The protein resides in the cytoplasm. In terms of biological role, together with the chaperonin GroEL, plays an essential role in assisting protein folding. The GroEL-GroES system forms a nano-cage that allows encapsulation of the non-native substrate proteins and provides a physical environment optimized to promote and accelerate protein folding. GroES binds to the apical surface of the GroEL ring, thereby capping the opening of the GroEL channel. The chain is Co-chaperonin GroES from Lactobacillus gasseri (strain ATCC 33323 / DSM 20243 / BCRC 14619 / CIP 102991 / JCM 1131 / KCTC 3163 / NCIMB 11718 / NCTC 13722 / AM63).